A 300-amino-acid chain; its full sequence is Formate dehydrogenase-O iron-sulfur subunit (300 aa).

Topologically, residues 1-260 (MAYQSQDIIR…KFWKGIWKPL (260 aa)) are cytoplasmic. 4 4Fe-4S ferredoxin-type domains span residues 30–60 (VAKL…DTVG), 91–123 (LEWL…QYAN), 124–153 (GIVD…LNPE), and 158–189 (YKCT…FGTK). [4Fe-4S] cluster is bound by residues cysteine 39, cysteine 42, cysteine 45, cysteine 49, cysteine 100, cysteine 103, cysteine 108, cysteine 112, cysteine 133, cysteine 136, cysteine 139, cysteine 143, cysteine 160, cysteine 163, cysteine 175, and cysteine 179. A helical transmembrane segment spans residues 261-279 (AAVGFAATFAASIFHYVGV). Residues 280–300 (GPNRADEEENNLHEEKDEERK) are Periplasmic-facing.

Formate dehydrogenase is a membrane-bound complex, formed by subunits alpha, beta and gamma. [4Fe-4S] cluster is required as a cofactor.

The protein resides in the cell membrane. Functionally, allows to use formate as major electron donor during aerobic respiration. The beta chain is an electron transfer unit containing 4 cysteine clusters involved in the formation of iron-sulfur centers. Electrons are transferred from the gamma chain to the molybdenum cofactor of the alpha subunit. This chain is Formate dehydrogenase-O iron-sulfur subunit (fdoH), found in Escherichia coli (strain K12).